We begin with the raw amino-acid sequence, 273 residues long: Karrikin insensitive 2 receptor B (273 aa).

S95 acts as the Nucleophile in catalysis. Residue D217 is part of the active site.

The protein belongs to the AB hydrolase superfamily. As to expression, expressed in stigma.

It is found in the nucleus. It localises to the cytoplasm. May be involved in plant olfaction during volatile communication. The chain is Karrikin insensitive 2 receptor B from Petunia hybrida (Petunia).